Consider the following 129-residue polypeptide: Ribulose bisphosphate carboxylase small subunit (129 aa).

Over residues 104–120 (ENEPSLRMTRTESDGRS) the composition is skewed to basic and acidic residues. The segment at 104–129 (ENEPSLRMTRTESDGRSQHYTWETQR) is disordered.

It belongs to the RuBisCO small chain family. As to quaternary structure, heterohexadecamer of 8 large and 8 small subunits.

RuBisCO catalyzes two reactions: the carboxylation of D-ribulose 1,5-bisphosphate, the primary event in carbon dioxide fixation, as well as the oxidative fragmentation of the pentose substrate. Both reactions occur simultaneously and in competition at the same active site. Although the small subunit is not catalytic it is essential for maximal activity. The chain is Ribulose bisphosphate carboxylase small subunit from Sinorhizobium medicae (strain WSM419) (Ensifer medicae).